A 305-amino-acid chain; its full sequence is UDP-3-O-acyl-N-acetylglucosamine deacetylase (305 aa).

Positions 78, 237, and 241 each coordinate Zn(2+). H264 acts as the Proton donor in catalysis.

The protein belongs to the LpxC family. It depends on Zn(2+) as a cofactor.

The enzyme catalyses a UDP-3-O-[(3R)-3-hydroxyacyl]-N-acetyl-alpha-D-glucosamine + H2O = a UDP-3-O-[(3R)-3-hydroxyacyl]-alpha-D-glucosamine + acetate. It participates in glycolipid biosynthesis; lipid IV(A) biosynthesis; lipid IV(A) from (3R)-3-hydroxytetradecanoyl-[acyl-carrier-protein] and UDP-N-acetyl-alpha-D-glucosamine: step 2/6. Its function is as follows. Catalyzes the hydrolysis of UDP-3-O-myristoyl-N-acetylglucosamine to form UDP-3-O-myristoylglucosamine and acetate, the committed step in lipid A biosynthesis. In Ralstonia pickettii (strain 12J), this protein is UDP-3-O-acyl-N-acetylglucosamine deacetylase.